Here is a 343-residue protein sequence, read N- to C-terminus: Ribosomal RNA small subunit methyltransferase, chloroplastic (343 aa).

A chloroplast-targeting transit peptide spans 1–48; it reads MMNAVITSATINCNSLSPSWTCGDNSPSKLLLGEISAALSRRRTVKVS. Residues histidine 78, methionine 80, glycine 105, glutamate 126, aspartate 151, and asparagine 183 each contribute to the S-adenosyl-L-methionine site.

The protein belongs to the class I-like SAM-binding methyltransferase superfamily. rRNA adenine N(6)-methyltransferase family.

Its subcellular location is the plastid. It is found in the chloroplast. Required for methylation of the 3' adenosines in the small subunit of plastid rRNA. Essential for chloroplast biogenesis at low temperatures. In Arabidopsis thaliana (Mouse-ear cress), this protein is Ribosomal RNA small subunit methyltransferase, chloroplastic.